We begin with the raw amino-acid sequence, 963 residues long: Unconventional myosin-XIX (963 aa).

One can recognise a Myosin motor domain in the interval 35–758 (HQLDDLTKVN…MLELLECGRA (724 aa)). Position 132 to 139 (132 to 139 (GESGAGKT)) interacts with ATP. The interval 602-624 (LEQLLQVLHNTTPHYIRCIKPNS) is actin-binding. 2 IQ domains span residues 762–782 (EQCARCIQCGWRRHRLQKQEK) and 783–812 (QRRAAVLIQAAFRSWLTRKHIRRLHIAATV). The myMOMA region stretch occupies residues 829–963 (SKELDGMEEK…LLESHRPVQV (135 aa)).

It belongs to the TRAFAC class myosin-kinesin ATPase superfamily. Myosin family. As to quaternary structure, myosin is a hexamer of 2 heavy chains and 4 light chains: interacts with myosin light chains MYL9 and MYL12B.

The protein localises to the mitochondrion outer membrane. It is found in the cytoplasm. It localises to the cytoskeleton. Functionally, actin-based motor molecule with ATPase activity that localizes to the mitochondrion outer membrane. Motor protein that moves towards the plus-end of actin filaments. Required for mitochondrial inheritance during mitosis. May be involved in mitochondrial transport or positioning. This Mus musculus (Mouse) protein is Unconventional myosin-XIX.